The following is a 257-amino-acid chain: Acetylglutamate kinase (257 aa).

Substrate is bound by residues 43 to 44 (GG), Arg65, and Asn157. Residues 180–185 (DVSGIL) and 208–210 (IIT) each bind ATP.

Belongs to the acetylglutamate kinase family. ArgB subfamily. Homodimer.

It is found in the cytoplasm. The catalysed reaction is N-acetyl-L-glutamate + ATP = N-acetyl-L-glutamyl 5-phosphate + ADP. The protein operates within amino-acid biosynthesis; L-arginine biosynthesis; N(2)-acetyl-L-ornithine from L-glutamate: step 2/4. Catalyzes the ATP-dependent phosphorylation of N-acetyl-L-glutamate. In Serratia proteamaculans (strain 568), this protein is Acetylglutamate kinase.